The chain runs to 292 residues: 2-hydroxy-3-oxopropionate reductase (292 aa).

NAD(+)-binding positions include 4–18 (GFIG…MAIN) and Ser-94. The active site involves Lys-169. NAD(+) is bound at residue Lys-237.

Belongs to the HIBADH-related family.

The enzyme catalyses (R)-glycerate + NADP(+) = 2-hydroxy-3-oxopropanoate + NADPH + H(+). The catalysed reaction is (R)-glycerate + NAD(+) = 2-hydroxy-3-oxopropanoate + NADH + H(+). It functions in the pathway organic acid metabolism; glycolate degradation; 3-phospho-D-glycerate from glycolate: step 3/4. In Escherichia coli (strain K12), this protein is 2-hydroxy-3-oxopropionate reductase (glxR).